The sequence spans 2763 residues: Large tegument protein deneddylase (2763 aa).

The deubiquitination activity stretch occupies residues 1–247; that stretch reads MDIIPPIAVT…CDTYFTDEQY (247 aa). The Peptidase C76 domain occupies 12–237; sequence AGVGSRNQFD…SSAVTLIYGS (226 aa). Catalysis depends on residues Cys32, Asp168, and His170. The interaction with inner tegument protein stretch occupies residues 495 to 523; the sequence is LELFINLTILRLTGFVVENGTRTHHGATS. Residues 2456–2476 are disordered; sequence VRPAQPAQPAQPAQPAQTVQP. Tandem repeats lie at residues 2458-2460, 2461-2463, 2464-2466, 2467-2469, and 2470-2472. A 5 X 3 AA repeats of P-A-Q region spans residues 2458–2472; it reads PAQPAQPAQPAQPAQ. Over residues 2459 to 2476 the composition is skewed to low complexity; the sequence is AQPAQPAQPAQPAQTVQP.

The protein belongs to the herpesviridae large tegument protein family. Interacts with host CUL1 and CUL4A; these interactions inhibit the E3 ligase activity of cullins. Interacts with inner tegument protein. Interacts with capsid vertex specific component CVC2. Interacts with the major capsid protein/MCP.

Its subcellular location is the virion tegument. It is found in the host cytoplasm. The protein resides in the host nucleus. The catalysed reaction is Thiol-dependent hydrolysis of ester, thioester, amide, peptide and isopeptide bonds formed by the C-terminal Gly of ubiquitin (a 76-residue protein attached to proteins as an intracellular targeting signal).. Large tegument protein that plays multiple roles in the viral cycle. During viral entry, remains associated with the capsid while most of the tegument is detached and participates in the capsid transport toward the host nucleus. Plays a role in the routing of the capsid at the nuclear pore complex and subsequent uncoating. Within the host nucleus, acts as a deneddylase and promotes the degradation of nuclear CRLs (cullin-RING ubiquitin ligases) and thereby stabilizes nuclear CRL substrates, while cytoplasmic CRLs remain unaffected. These modifications prevent host cell cycle S-phase progression and create a favorable environment allowing efficient viral genome replication. Participates later in the secondary envelopment of capsids. Indeed, plays a linker role for the association of the outer viral tegument to the capsids together with the inner tegument protein. This is Large tegument protein deneddylase from Homo sapiens (Human).